Consider the following 172-residue polypeptide: MNPFRWSFRAQFLLGFLACAGLLAYAIYVQLHLGLEPCPLCIFQRIAFAALAVFFLIGALHGPRAAGARKVYGVLSFIAAGVGMGIGARHVWVQIRPKDMMSSCGPPLSFLSETMGPFEVFRTVLTGTGDCGNIDWRFLGLSMPMWSMVWFVGLALWALSAGFKARRSSLHH.

The Cytoplasmic portion of the chain corresponds to 1 to 11; that stretch reads MNPFRWSFRAQ. The helical transmembrane segment at 12–28 threads the bilayer; it reads FLLGFLACAGLLAYAIY. Residues 29-46 lie on the Periplasmic side of the membrane; the sequence is VQLHLGLEPCPLCIFQRI. Residues cysteine 38 and cysteine 41 are joined by a disulfide bond. Residues 47-63 form a helical membrane-spanning segment; that stretch reads AFAALAVFFLIGALHGP. At 64-70 the chain is on the cytoplasmic side; the sequence is RAAGARK. The chain crosses the membrane as a helical span at residues 71 to 88; it reads VYGVLSFIAAGVGMGIGA. Residues 89 to 145 are Periplasmic-facing; that stretch reads RHVWVQIRPKDMMSSCGPPLSFLSETMGPFEVFRTVLTGTGDCGNIDWRFLGLSMPM. A disulfide bridge links cysteine 104 with cysteine 131. A helical transmembrane segment spans residues 146–164; it reads WSMVWFVGLALWALSAGFK. At 165-172 the chain is on the cytoplasmic side; the sequence is ARRSSLHH.

The protein belongs to the DsbB family.

It is found in the cell inner membrane. Functionally, required for disulfide bond formation in some periplasmic proteins. Acts by oxidizing the DsbA protein. The sequence is that of Disulfide bond formation protein B from Xanthomonas oryzae pv. oryzae (strain MAFF 311018).